The chain runs to 503 residues: GMP synthase [glutamine-hydrolyzing] (503 aa).

Residues 1 to 189 (MVLVLDFGSQ…FLELAGAKRD (189 aa)) enclose the Glutamine amidotransferase type-1 domain. Cys78 acts as the Nucleophile in catalysis. Residues His164 and Glu166 contribute to the active site. The GMPS ATP-PPase domain occupies 190 to 378 (WTPEHVLEEL…LGLPDTLRLR (189 aa)). 217–223 (SGGVDSS) serves as a coordination point for ATP.

Homodimer.

The enzyme catalyses XMP + L-glutamine + ATP + H2O = GMP + L-glutamate + AMP + diphosphate + 2 H(+). The protein operates within purine metabolism; GMP biosynthesis; GMP from XMP (L-Gln route): step 1/1. Its function is as follows. Catalyzes the synthesis of GMP from XMP. The chain is GMP synthase [glutamine-hydrolyzing] from Thermus thermophilus (strain ATCC BAA-163 / DSM 7039 / HB27).